A 485-amino-acid polypeptide reads, in one-letter code: GlcNAc-binding protein A (485 aa).

A signal peptide spans 1 to 23 (MKKQPKMTAIALILSGISGLAYG). The region spanning 24–201 (HGYVSAVENG…SFYNVIDVKF (178 aa)) is the Chitin-binding type-4 domain. One can recognise a Chitin-binding type-3 domain in the interval 437–478 (AGTKVLASDGAIYQCKPWPYSGYCQQWTSNATQYQPGTGSHW).

It belongs to the GbpA family.

Its subcellular location is the secreted. Its function is as follows. Probably interacts with GlcNAc residues. May promote attachment to both epithelial cell surfaces and chitin. In Vibrio cholerae serotype O1 (strain M66-2), this protein is GlcNAc-binding protein A.